We begin with the raw amino-acid sequence, 140 residues long: Putative pre-16S rRNA nuclease (140 aa).

Belongs to the YqgF nuclease family.

It localises to the cytoplasm. Its function is as follows. Could be a nuclease involved in processing of the 5'-end of pre-16S rRNA. The protein is Putative pre-16S rRNA nuclease of Moorella thermoacetica (strain ATCC 39073 / JCM 9320).